The sequence spans 406 residues: 4-hydroxy-3-methylbut-2-en-1-yl diphosphate synthase (ferredoxin) (406 aa).

Cysteine 315, cysteine 318, cysteine 349, and glutamate 356 together coordinate [4Fe-4S] cluster.

The protein belongs to the IspG family. [4Fe-4S] cluster serves as cofactor.

It catalyses the reaction (2E)-4-hydroxy-3-methylbut-2-enyl diphosphate + 2 oxidized [2Fe-2S]-[ferredoxin] + H2O = 2-C-methyl-D-erythritol 2,4-cyclic diphosphate + 2 reduced [2Fe-2S]-[ferredoxin] + H(+). It participates in isoprenoid biosynthesis; isopentenyl diphosphate biosynthesis via DXP pathway; isopentenyl diphosphate from 1-deoxy-D-xylulose 5-phosphate: step 5/6. In terms of biological role, converts 2C-methyl-D-erythritol 2,4-cyclodiphosphate (ME-2,4cPP) into 1-hydroxy-2-methyl-2-(E)-butenyl 4-diphosphate. This Gloeothece citriformis (strain PCC 7424) (Cyanothece sp. (strain PCC 7424)) protein is 4-hydroxy-3-methylbut-2-en-1-yl diphosphate synthase (ferredoxin).